We begin with the raw amino-acid sequence, 354 residues long: MTLFESINAGGTQILGVAWPTVWALVRILVVAVVILLCVAYLILWERKLIGWMHVRLGPNRVGPAGLLQPIADVLKLLLKEVIQPTQASRWVYLVAPVMVVVPAFAVWAVIPFQAGAVLGDINAGLLYAISISSVGVYGVILAGWASNSKYAFLGAMRAAAQMVSYEVSMGFALVVVMMTAGTMNLSDIVGSQMRGIFASHGVTFLSWNWLPLLPAFVVYFVSGIAETNRHPFDVVEGESEIVAGHMIDYSGMAFALFFLAEYINMIVISALASILFLGGWSAPFEFLSFIPGIVWLVLKVFLLLSVFIWVRATFPRYRYDQIMRLGWKVFLPVTVIWVVVVGFWIMSPLNIWN.

The next 8 helical transmembrane spans lie at 25–45 (LVRI…LILW), 91–111 (WVYL…WAVI), 126–146 (LLYA…AGWA), 170–190 (MGFA…SDIV), 205–225 (FLSW…VSGI), 257–277 (LFFL…SILF), 290–310 (FIPG…VFIW), and 330–350 (VFLP…MSPL).

Belongs to the complex I subunit 1 family. As to quaternary structure, NDH-1 is composed of 14 different subunits. Subunits NuoA, H, J, K, L, M, N constitute the membrane sector of the complex.

The protein resides in the cell inner membrane. It catalyses the reaction a quinone + NADH + 5 H(+)(in) = a quinol + NAD(+) + 4 H(+)(out). Functionally, NDH-1 shuttles electrons from NADH, via FMN and iron-sulfur (Fe-S) centers, to quinones in the respiratory chain. The immediate electron acceptor for the enzyme in this species is believed to be ubiquinone. Couples the redox reaction to proton translocation (for every two electrons transferred, four hydrogen ions are translocated across the cytoplasmic membrane), and thus conserves the redox energy in a proton gradient. This subunit may bind ubiquinone. In Paraburkholderia phymatum (strain DSM 17167 / CIP 108236 / LMG 21445 / STM815) (Burkholderia phymatum), this protein is NADH-quinone oxidoreductase subunit H.